Reading from the N-terminus, the 428-residue chain is MGPPLGAGVSCRGGCGSSRLLAWCFLLALSPQAPGSRGAEAVWTAYLNVSWRVPHTGVNRTVWELSEEGVYGQDSPLEPVAGVLVPPDGPGALNACNPHTNFTVPTVWGSTVQVSWLALIQRGGGCTFADKIHLAYERGASGAVIFNFPGTRNEVIPMSHPGAGDIVAIMIGNLKGTKILQSIQRGIQVTMVIEVGKKHGPWVNHYSIFFVSVSFFIITAATVGYFIFYSARRLRNARAQSRKQRQLKADAKKAIGRLQLRTLKQGDREIGPDGDSCAVCIELYKPNDLVRILTCNHIFHKTCVDPWLLEHRTCPMCKCDILKALGIEVDVEDGSVSLQVPVSNEISNSASSHEEDNRSETASSGYASVQGADEPPLEEHVQSTNENLQLVNHEANSVAVDVIPHVDNPTFEEDETPHQETAVREIKS.

The signal sequence occupies residues 1 to 38 (MGPPLGAGVSCRGGCGSSRLLAWCFLLALSPQAPGSRG). N-linked (GlcNAc...) asparagine glycans are attached at residues N48, N59, and N101. Residues 75–183 (SPLEPVAGVL…LKGTKILQSI (109 aa)) enclose the PA domain. Residues 208-228 (IFFVSVSFFIITAATVGYFIF) form a helical membrane-spanning segment. The segment at 277-318 (CAVCIELYKPNDLVRILTCNHIFHKTCVDPWLLEHRTCPMCK) adopts an RING-type; atypical zinc-finger fold. The disordered stretch occupies residues 346–428 (ISNSASSHEE…QETAVREIKS (83 aa)). Over residues 416–428 (TPHQETAVREIKS) the composition is skewed to basic and acidic residues.

In terms of processing, auto-ubiquitinated. Controls the development of T-cell clonal anergy by ubiquitination.

Its subcellular location is the cytoplasm. It localises to the endomembrane system. It is found in the cytoskeleton. The protein resides in the perinuclear region. The catalysed reaction is S-ubiquitinyl-[E2 ubiquitin-conjugating enzyme]-L-cysteine + [acceptor protein]-L-lysine = [E2 ubiquitin-conjugating enzyme]-L-cysteine + N(6)-ubiquitinyl-[acceptor protein]-L-lysine.. It functions in the pathway protein modification; protein ubiquitination. E3 ubiquitin-protein ligase that catalyzes 'Lys-27', 'Lys-48'- or 'Lys-63'-linked polyubiquitin chains formation and plays a role in different biological processes such as modulation of immune response, cytoskeletal dynamics or protein homeostasis. Inhibits IL2 and IL4 transcription, thereby playing an important role in the induction of the anergic phenotype, a long-term stable state of T-lymphocyte unresponsiveness to antigenic stimulation associated with the blockade of interleukin production. Ubiquitinates ARPC5 with 'Lys-48' linkages and COR1A with 'Lys-63' linkages leading to their degradation, down-regulation of these cytoskeletal components results in impaired lamellipodium formation and reduced accumulation of F-actin at the immunological synapse. Functions in the patterning of the dorsal ectoderm; sensitizes ectoderm to respond to neural-inducing signals. Plays a positive role in innate immune response by promoting 'Lys-63'-linked ubiquitination of TBK1 after RNA- or DNA-virus infection. Regulates alveolar macrophage activation and neutrophil infiltration by interacting with TLR4, targeting it for degradation, and inhibiting NF-kappa-B activation, hence decreasing pro-inflammatory cytokines. Negatively regulates the IL-3/STAT5 signaling pathway by facilitating 'Lys-27'-linked polyubiquitination of IL3RA leading to its degradation via lysosomal pathway. Directly regulates the N-glycosylation process in the endoplasmic reticulum by targeting the glycosyl-transferase RPN1 for ubiquitination and degradation. Other substrates targeted for degradation by RNF128 include transmembrane proteins CD40L, CD83 or the tetraspanin CD151. This chain is E3 ubiquitin-protein ligase RNF128 (RNF128), found in Pongo abelii (Sumatran orangutan).